Reading from the N-terminus, the 270-residue chain is Formamidopyrimidine-DNA glycosylase (270 aa).

Pro-2 serves as the catalytic Schiff-base intermediate with DNA. The active-site Proton donor is the Glu-3. Lys-57 functions as the Proton donor; for beta-elimination activity in the catalytic mechanism. DNA contacts are provided by His-90, Arg-109, and Arg-151. The segment at 236–270 (QVYGRGGKLCMVCSNRLKEVRLGQRSTVYCTQCQR) adopts an FPG-type zinc-finger fold. The active-site Proton donor; for delta-elimination activity is Arg-260.

The protein belongs to the FPG family. As to quaternary structure, monomer. Zn(2+) serves as cofactor.

It catalyses the reaction Hydrolysis of DNA containing ring-opened 7-methylguanine residues, releasing 2,6-diamino-4-hydroxy-5-(N-methyl)formamidopyrimidine.. The enzyme catalyses 2'-deoxyribonucleotide-(2'-deoxyribose 5'-phosphate)-2'-deoxyribonucleotide-DNA = a 3'-end 2'-deoxyribonucleotide-(2,3-dehydro-2,3-deoxyribose 5'-phosphate)-DNA + a 5'-end 5'-phospho-2'-deoxyribonucleoside-DNA + H(+). Functionally, involved in base excision repair of DNA damaged by oxidation or by mutagenic agents. Acts as a DNA glycosylase that recognizes and removes damaged bases. Has a preference for oxidized purines, such as 7,8-dihydro-8-oxoguanine (8-oxoG). Has AP (apurinic/apyrimidinic) lyase activity and introduces nicks in the DNA strand. Cleaves the DNA backbone by beta-delta elimination to generate a single-strand break at the site of the removed base with both 3'- and 5'-phosphates. The chain is Formamidopyrimidine-DNA glycosylase from Idiomarina loihiensis (strain ATCC BAA-735 / DSM 15497 / L2-TR).